The sequence spans 338 residues: Fructose-1,6-bisphosphatase class 1 (338 aa).

Mg(2+)-binding residues include glutamate 92, aspartate 115, leucine 117, and aspartate 118. Substrate is bound by residues 118–121 (DGSS), asparagine 211, tyrosine 244, 262–264 (YLY), and lysine 274. Mg(2+) is bound at residue glutamate 280.

This sequence belongs to the FBPase class 1 family. Homotetramer. Mg(2+) is required as a cofactor.

It localises to the cytoplasm. It catalyses the reaction beta-D-fructose 1,6-bisphosphate + H2O = beta-D-fructose 6-phosphate + phosphate. It participates in carbohydrate biosynthesis; gluconeogenesis. In Vibrio vulnificus (strain YJ016), this protein is Fructose-1,6-bisphosphatase class 1.